Consider the following 382-residue polypeptide: 8-amino-7-oxononanoate synthase (382 aa).

Substrate-binding residues include Arg21 and His131. The pyridoxal 5'-phosphate site is built by Ser178, His206, and Thr232. Lys235 bears the N6-(pyridoxal phosphate)lysine mark. Thr349 contacts substrate.

This sequence belongs to the class-II pyridoxal-phosphate-dependent aminotransferase family. BioF subfamily. As to quaternary structure, homodimer. Pyridoxal 5'-phosphate serves as cofactor.

It catalyses the reaction 6-carboxyhexanoyl-[ACP] + L-alanine + H(+) = (8S)-8-amino-7-oxononanoate + holo-[ACP] + CO2. It participates in cofactor biosynthesis; biotin biosynthesis. In terms of biological role, catalyzes the decarboxylative condensation of pimeloyl-[acyl-carrier protein] and L-alanine to produce 8-amino-7-oxononanoate (AON), [acyl-carrier protein], and carbon dioxide. The chain is 8-amino-7-oxononanoate synthase from Serratia marcescens.